The chain runs to 1075 residues: MPKRTDIKSILILGAGPIVIGQACEFDYSGAQACKALREEGYRVILVNSNPATIMTDPEMADATYIEPIHWEVVRKIIEKERPDAVLPTMGGQTALNCALELERQGVLEEFGVTMIGATADAIDKAEDRRRFDIAMKKIGLDTARSGIAHTMEEALAVAADVGFPCIIRPSFTMGGTGGGIAYNREEFEEICERGLDLSPTNELLIDESLIGWKEYEMEVVRDKNDNCIIVCSIENFDAMGIHTGDSITVAPAQTLTDKEYQIMRNASMAVLREIGVETGGSNVQFAVNPKNGRLIVIEMNPRVSRSSALASKATGFPIAKVAAKLAVGYTLDELMNDITGGRTPASFEPSIDYVVTKIPRFNFEKFAGANDRLTTQMKSVGEVMAIGRTQQESLQKALRGLEVGATGFDPKVSLDDPEALTKIRRELKDAGADRIWYIADAFRAGLSVDGVFNLTNIDRWFLVQIEELVRLEEKVAEVGITGLNADFLRQLKRKGFADARLAKLAGVREAEIRKLRDQYDLHPVYKRVDTCAAEFATDTAYMYSTYEDECEANPSIDRDKIMVLGGGPNRIGQGIEFDYCCVHASLALREDGYETIMVNCNPETVSTDYDTSDRLYFEPVTLEDVLEIVRIEKPKGVIVQYGGQTPLKLARALEAAGVPVIGTSPDAIDRAEDRERFQHAVDRLKLKQPANATVTAIEQAVEKAKEIGYPLVVRPSYVLGGRAMEIVYDEADLRRYFQTAVSVSNDAPVLLDRFLDDAVEVDVDAICDGEMVLIGGIMEHIEQAGVHSGDSACSLPAYTLSQEIQDVMRQQVQKLAFELQVRGLMNVQFAVKDNEVYLIEVNPRAARTVPFVSKATGVPLAKVAARVMAGKSLTEQGVTQEIIPPYYSVKEVVLPFNKFPGVDPLLGPEMRSTGEVMGVGRTFAEAFAKAQLGSNSTMKKQGRALLSVREGDKERVVDLAAKLLKQGFELDATHGTAIVLGEAGINPRLVNKVHEGRPHIQDRIKNGEYTYIINTTAGRRAIEDSRVIRRSALQYKVHYDTTLNGGFATTMALNADATEKVTSVQEMHAQIKKS.

The segment at 2–403 (PKRTDIKSIL…SLQKALRGLE (402 aa)) is carboxyphosphate synthetic domain. Positions 129, 169, 175, 176, 208, 210, 215, 241, 242, 243, 285, and 299 each coordinate ATP. An ATP-grasp 1 domain is found at 133 to 328 (DIAMKKIGLD…IAKVAAKLAV (196 aa)). Positions 285, 299, and 301 each coordinate Mg(2+). Mn(2+) is bound by residues Gln-285, Glu-299, and Asn-301. The interval 404-553 (VGATGFDPKV…YSTYEDECEA (150 aa)) is oligomerization domain. The carbamoyl phosphate synthetic domain stretch occupies residues 554 to 936 (NPSIDRDKIM…AFAKAQLGSN (383 aa)). The ATP-grasp 2 domain occupies 679–870 (QHAVDRLKLK…LAKVAARVMA (192 aa)). ATP is bound by residues Arg-715, Arg-754, Leu-756, Glu-761, Gly-786, Val-787, His-788, Ser-789, Gln-829, and Glu-841. Mg(2+) is bound by residues Gln-829, Glu-841, and Asn-843. Mn(2+) contacts are provided by Gln-829, Glu-841, and Asn-843. The region spanning 937 to 1075 (STMKKQGRAL…QEMHAQIKKS (139 aa)) is the MGS-like domain. The segment at 937 to 1075 (STMKKQGRAL…QEMHAQIKKS (139 aa)) is allosteric domain.

The protein belongs to the CarB family. In terms of assembly, composed of two chains; the small (or glutamine) chain promotes the hydrolysis of glutamine to ammonia, which is used by the large (or ammonia) chain to synthesize carbamoyl phosphate. Tetramer of heterodimers (alpha,beta)4. Requires Mg(2+) as cofactor. The cofactor is Mn(2+).

It catalyses the reaction hydrogencarbonate + L-glutamine + 2 ATP + H2O = carbamoyl phosphate + L-glutamate + 2 ADP + phosphate + 2 H(+). It carries out the reaction hydrogencarbonate + NH4(+) + 2 ATP = carbamoyl phosphate + 2 ADP + phosphate + 2 H(+). It participates in amino-acid biosynthesis; L-arginine biosynthesis; carbamoyl phosphate from bicarbonate: step 1/1. It functions in the pathway pyrimidine metabolism; UMP biosynthesis via de novo pathway; (S)-dihydroorotate from bicarbonate: step 1/3. Functionally, large subunit of the glutamine-dependent carbamoyl phosphate synthetase (CPSase). CPSase catalyzes the formation of carbamoyl phosphate from the ammonia moiety of glutamine, carbonate, and phosphate donated by ATP, constituting the first step of 2 biosynthetic pathways, one leading to arginine and/or urea and the other to pyrimidine nucleotides. The large subunit (synthetase) binds the substrates ammonia (free or transferred from glutamine from the small subunit), hydrogencarbonate and ATP and carries out an ATP-coupled ligase reaction, activating hydrogencarbonate by forming carboxy phosphate which reacts with ammonia to form carbamoyl phosphate. The chain is Carbamoyl phosphate synthase large chain from Salmonella typhimurium (strain LT2 / SGSC1412 / ATCC 700720).